A 147-amino-acid polypeptide reads, in one-letter code: 6-pyruvoyl tetrahydrobiopterin synthase (147 aa).

H26 provides a ligand contact to Zn(2+). C45 (proton acceptor) is an active-site residue. Zn(2+)-binding residues include H51 and H53. Catalysis depends on charge relay system residues H92 and E136.

This sequence belongs to the PTPS family. In terms of assembly, homohexamer formed of two homotrimers in a head to head fashion. The cofactor is Zn(2+).

The enzyme catalyses 7,8-dihydroneopterin 3'-triphosphate = 6-pyruvoyl-5,6,7,8-tetrahydropterin + triphosphate + H(+). It participates in cofactor biosynthesis; tetrahydrobiopterin biosynthesis; tetrahydrobiopterin from 7,8-dihydroneopterin triphosphate: step 1/3. Functionally, involved in the biosynthesis of tetrahydrobiopterin, an essential cofactor of aromatic amino acid hydroxylases. Catalyzes the transformation of 7,8-dihydroneopterin triphosphate into 6-pyruvoyl tetrahydropterin. In Poecilia reticulata (Guppy), this protein is 6-pyruvoyl tetrahydrobiopterin synthase (pts).